Reading from the N-terminus, the 624-residue chain is Pentatricopeptide repeat-containing protein At2g32630 (624 aa).

PPR repeat units follow at residues 153-187 (FEKFFDLVFRVYVDNGMFEEGLRVFDYMVKKGLSI), 188-222 (DERSCIVFLVAAKKRRRIDLCLEIFRRMVDSGVKI), 223-257 (TVYSLTIVVEGLCRRGEVEKSKKLIKEFSVKGIKP), 258-292 (EAYTYNTIINAYVKQRDFSGVEGVLKVMKKDGVVY), 293-327 (NKVTYTLLMELSVKNGKMSDAEKLFDEMRERGIES), 328-362 (DVHVYTSLISWNCRKGNMKRAFLLFDELTEKGLSP), 363-397 (SSYTYGALIDGVCKVGEMGAAEILMNEMQSKGVNI), 398-432 (TQVVFNTLIDGYCRKGMVDEASMIYDVMEQKGFQA), 433-467 (DVFTCNTIASCFNRLKRYDEAKQWLFRMMEGGVKL), 468-502 (STVSYTNLIDVYCKEGNVEEAKRLFVEMSSKGVQP), 503-537 (NAITYNVMIYAYCKQGKIKEARKLRANMEANGMDP), 538-572 (DSYTYTSLIHGECIADNVDEAMRLFSEMGLKGLDQ), and 573-607 (NSVTYTVMISGLSKAGKSDEAFGLYDEMKRKGYTI).

Belongs to the PPR family. P subfamily.

The polypeptide is Pentatricopeptide repeat-containing protein At2g32630 (Arabidopsis thaliana (Mouse-ear cress)).